The primary structure comprises 445 residues: Phosphoglucosamine mutase (445 aa).

S99 acts as the Phosphoserine intermediate in catalysis. Mg(2+) contacts are provided by S99, D242, D244, and D246. S99 carries the post-translational modification Phosphoserine.

The protein belongs to the phosphohexose mutase family. Mg(2+) serves as cofactor. Post-translationally, activated by phosphorylation.

It catalyses the reaction alpha-D-glucosamine 1-phosphate = D-glucosamine 6-phosphate. Functionally, catalyzes the conversion of glucosamine-6-phosphate to glucosamine-1-phosphate. The chain is Phosphoglucosamine mutase from Nitratiruptor sp. (strain SB155-2).